Consider the following 278-residue polypeptide: Small ribosomal subunit protein uS2 (278 aa).

Disordered regions lie at residues 216–235 (EAAAAAKEAEDDTGYTTQWD) and 250–278 (NFAAAPADGNWGATTGGDWAAAGGEEWTN). Low complexity predominate over residues 256–278 (ADGNWGATTGGDWAAAGGEEWTN).

This sequence belongs to the universal ribosomal protein uS2 family. Component of the small ribosomal subunit. Mature ribosomes consist of a small (40S) and a large (60S) subunit. The 40S subunit contains about 33 different proteins and 1 molecule of RNA (18S). The 60S subunit contains about 49 different proteins and 3 molecules of RNA (25S, 5.8S and 5S). Interacts with ribosomal protein S21.

It localises to the cytoplasm. In terms of biological role, required for the assembly and/or stability of the 40S ribosomal subunit. Required for the processing of the 20S rRNA-precursor to mature 18S rRNA in a late step of the maturation of 40S ribosomal subunits. This Monosiga brevicollis (Choanoflagellate) protein is Small ribosomal subunit protein uS2.